Consider the following 265-residue polypeptide: 3-methyl-2-oxobutanoate hydroxymethyltransferase (265 aa).

The Mg(2+) site is built by Asp45 and Asp84. 3-methyl-2-oxobutanoate contacts are provided by residues 45–46 (DS), Asp84, and Lys112. Mg(2+) is bound at residue Glu114. The active-site Proton acceptor is Glu181.

The protein belongs to the PanB family. In terms of assembly, homodecamer; pentamer of dimers. Requires Mg(2+) as cofactor.

Its subcellular location is the cytoplasm. It carries out the reaction 3-methyl-2-oxobutanoate + (6R)-5,10-methylene-5,6,7,8-tetrahydrofolate + H2O = 2-dehydropantoate + (6S)-5,6,7,8-tetrahydrofolate. Its pathway is cofactor biosynthesis; (R)-pantothenate biosynthesis; (R)-pantoate from 3-methyl-2-oxobutanoate: step 1/2. Its function is as follows. Catalyzes the reversible reaction in which hydroxymethyl group from 5,10-methylenetetrahydrofolate is transferred onto alpha-ketoisovalerate to form ketopantoate. In Pectobacterium carotovorum subsp. carotovorum (strain PC1), this protein is 3-methyl-2-oxobutanoate hydroxymethyltransferase.